The primary structure comprises 458 residues: Neuronal acetylcholine receptor subunit beta-3 (458 aa).

A signal peptide spans 1-21 (MLPDFMLVLIVLGIPSSATTG). The Extracellular portion of the chain corresponds to 22-237 (FNSIAENEDA…VLRRLPLFYT (216 aa)). Residues Asn51, Asn138, and Asn166 are each glycosylated (N-linked (GlcNAc...) asparagine). Cys153 and Cys167 are joined by a disulfide. The next 3 membrane-spanning stretches (helical) occupy residues 238–258 (LFLI…FYLP), 267–287 (LSTS…EIIP), and 300–320 (LLFI…VINV). The Cytoplasmic portion of the chain corresponds to 321–428 (HHRSSSTYHP…WKFVAQVLDR (108 aa)). The chain crosses the membrane as a helical span at residues 429 to 449 (IFLWLFLIVSVTGSVLIFTPA).

This sequence belongs to the ligand-gated ion channel (TC 1.A.9) family. Acetylcholine receptor (TC 1.A.9.1) subfamily. Beta-3/CHRNB3 sub-subfamily. Neuronal AChR seems to be composed of two different type of subunits: alpha and beta. CHRNB3/beta-3 subunit is only able to form functional nAChRs when co-assembled with another beta subunit. Participates in pentameric assemblies along with CHRNA4/alpha-4 and CHRNB2/beta-2 subunits and with CHRNA6/alpha-6 as well, forming stoichiometries such as (CHRNA3:CHRNB4)2:CHRNB3, (CHRNA4:CHRNB2)2:CHRNB3 or (CHRNA6:CHRNB2)2:CHRNB3.

The protein localises to the synaptic cell membrane. It is found in the cell membrane. The catalysed reaction is Ca(2+)(in) = Ca(2+)(out). It carries out the reaction K(+)(in) = K(+)(out). The enzyme catalyses Na(+)(in) = Na(+)(out). With respect to regulation, activated by a myriad of ligands such as acetylcholine, cytisine, nicotine, choline and epibatidine. In terms of biological role, component of neuronal acetylcholine receptors (nAChRs) that function as pentameric, ligand-gated cation channels with high calcium permeability among other activities. nAChRs are excitatory neurotrasnmitter receptors formed by a collection of nAChR subunits known to mediate synaptic transmission in the nervous system and the neuromuscular junction. Each nAchR subunit confers differential attributes to channel properties, including activation, deactivation and desensitization kinetics, pH sensitivity, cation permeability, and binding to allosteric modulators. Has an accessory rather than functional role and is only able to form functional nAChRs when co-assembled with another beta subunit. Participates in pentameric assemblies along with CHRNA3, CHRNA4, CHRNA6, CHRNB2 and CHRNB4. Modulates receptor assembly and increases receptor sensitivity to nicotine when associated with CHRNB2, CHRNA4 and/or CHRNA6 as well as CHRNA3 and CHRNB4. Seems to play a role in nicotine addiction. The sequence is that of Neuronal acetylcholine receptor subunit beta-3 from Homo sapiens (Human).